The chain runs to 287 residues: MNFIGKFLGLIIGWKLGGFFGAICGVILGHLGDKKLYELGTVNSSFFKSKITRQSLFMQTTFAVLGHLSKAKGRVTEDDIQLASHLMQQMQLDDANRRLAQEAFTRGKAADFPLRQVIREFRLGCGQRADLLRMFLHVQVQAAFADAQLDQSEKDVLYIVGEELGLSRFQFEQMLAMEFAARQFSRAGYQQQNRYQRDYGYQQHQQQYGGYQQQSGPTVDDAYKVLGVSATDDQQTVKRAYRRLMNENHPDKLVAKGLPKEMLEMAKEKTQQIQSAYDLICKTKGWK.

Residues 1–6 (MNFIGK) lie on the Periplasmic side of the membrane. A helical membrane pass occupies residues 7–30 (FLGLIIGWKLGGFFGAICGVILGH). The Cytoplasmic segment spans residues 31 to 287 (LGDKKLYELG…DLICKTKGWK (257 aa)). The region spanning 221–287 (DAYKVLGVSA…DLICKTKGWK (67 aa)) is the J domain.

Homodimer.

It is found in the cell inner membrane. Its function is as follows. Regulatory DnaK co-chaperone. Direct interaction between DnaK and DjlA is needed for the induction of the wcaABCDE operon, involved in the synthesis of a colanic acid polysaccharide capsule, possibly through activation of the RcsB/RcsC phosphotransfer signaling pathway. The colanic acid capsule may help the bacterium survive conditions outside the host. The chain is Co-chaperone protein DjlA from Pasteurella multocida (strain Pm70).